The primary structure comprises 308 residues: 1,4-dihydroxy-2-naphthoate octaprenyltransferase (308 aa).

Over 1-20 (MTEQQISRTQAWLESLRPKT) the chain is Cytoplasmic. The helical transmembrane segment at 21-41 (LPLAFAAIIVGTALAWWQGHF) threads the bilayer. Residue Asp42 is a topological domain, periplasmic. The helical transmembrane segment at 43–63 (PLVALLALITAGLLQILSNLA) threads the bilayer. Over 64 to 97 (NDYGDAVKGSDKPDRIGPLRGMQKGVITQQEMKR) the chain is Cytoplasmic. The chain crosses the membrane as a helical span at residues 98-118 (ALIITVVLICLSGLALVAVAC). Topologically, residues 119-123 (HTLAD) are periplasmic. A helical membrane pass occupies residues 124-144 (FVGFLILGGLSIIAAITYTVG). The Cytoplasmic portion of the chain corresponds to 145–148 (NRPY). The chain crosses the membrane as a helical span at residues 149–169 (GYIGLGDISVLVFFGWLSVMG). The Periplasmic segment spans residues 170–176 (SWYLQAH). Residues 177–197 (TLIPALILPATACGLLATAVL) form a helical membrane-spanning segment. The Cytoplasmic segment spans residues 198 to 227 (NINNLRDINSDRENGKNTLVVRLGEVNARR). A helical membrane pass occupies residues 228–247 (YHACLLMGSLVCLALFNLFS). Residues 248–250 (LHS) are Periplasmic-facing. A helical membrane pass occupies residues 251-270 (LWGWLFLLAAPLLVKQARYV). The Cytoplasmic segment spans residues 271–286 (MREMDPVAMRPMLERT). A helical membrane pass occupies residues 287–307 (VKGALLTNLLFVLGIFLSQWA). Ala308 is a topological domain (periplasmic).

Belongs to the MenA family. Type 1 subfamily.

It is found in the cell inner membrane. The enzyme catalyses an all-trans-polyprenyl diphosphate + 1,4-dihydroxy-2-naphthoate + H(+) = a 2-demethylmenaquinol + CO2 + diphosphate. It participates in quinol/quinone metabolism; menaquinone biosynthesis; menaquinol from 1,4-dihydroxy-2-naphthoate: step 1/2. Conversion of 1,4-dihydroxy-2-naphthoate (DHNA) to demethylmenaquinone (DMK). Attaches octaprenylpyrophosphate, a membrane-bound 40-carbon side chain to DHNA. The conversion of DHNA to DMK proceeds in three stages: the removal of the carboxyl group of DHNA as CO(2), the attachment of the isoprenoid side chain, and a quinol-to-quinone oxidation, which is thought to be spontaneous. This is 1,4-dihydroxy-2-naphthoate octaprenyltransferase from Escherichia coli (strain K12).